Consider the following 362-residue polypeptide: Phosphoserine aminotransferase (362 aa).

Positions 9 and 42 each coordinate L-glutamate. Pyridoxal 5'-phosphate contacts are provided by residues 76-77, W102, T153, D174, and Q197; that span reads GR. K198 carries the post-translational modification N6-(pyridoxal phosphate)lysine. A pyridoxal 5'-phosphate-binding site is contributed by 239-240; it reads NT.

The protein belongs to the class-V pyridoxal-phosphate-dependent aminotransferase family. SerC subfamily. Homodimer. Pyridoxal 5'-phosphate serves as cofactor.

Its subcellular location is the cytoplasm. The enzyme catalyses O-phospho-L-serine + 2-oxoglutarate = 3-phosphooxypyruvate + L-glutamate. The catalysed reaction is 4-(phosphooxy)-L-threonine + 2-oxoglutarate = (R)-3-hydroxy-2-oxo-4-phosphooxybutanoate + L-glutamate. It participates in amino-acid biosynthesis; L-serine biosynthesis; L-serine from 3-phospho-D-glycerate: step 2/3. Its pathway is cofactor biosynthesis; pyridoxine 5'-phosphate biosynthesis; pyridoxine 5'-phosphate from D-erythrose 4-phosphate: step 3/5. In terms of biological role, catalyzes the reversible conversion of 3-phosphohydroxypyruvate to phosphoserine and of 3-hydroxy-2-oxo-4-phosphonooxybutanoate to phosphohydroxythreonine. This Escherichia coli O139:H28 (strain E24377A / ETEC) protein is Phosphoserine aminotransferase.